A 120-amino-acid polypeptide reads, in one-letter code: Response regulator receiver protein CpdR (120 aa).

Positions 3-117 (RILLAEDDND…DLVNEIEKML (115 aa)) constitute a Response regulatory domain. Asp-52 is subject to 4-aspartylphosphate.

Post-translationally, is phosphorylated by ChpT-P on Asp-52.

The protein resides in the cytoplasm. In terms of biological role, component of a regulatory phosphorelay system that controls B.abortus cell growth, division, and intracellular survival inside mammalian host cells. This signaling pathway is composed of CckA, ChpT, CtrA and CpdR. CpdR is a response regulator substrate of ChpT. Unphosphorylated CpdR controls steady-state levels of CtrA in the B.abortus cell, likely via CtrA destabilization and activation of its proteolysis. The polypeptide is Response regulator receiver protein CpdR (Brucella abortus (strain 2308)).